Reading from the N-terminus, the 431-residue chain is uncharacterized protein (431 aa).

4 helical membrane passes run 228-248 (GLLS…HYLS), 279-299 (IGLP…NFTF), 349-369 (ILWP…FLWI), and 388-408 (MIFN…LKLY).

Its subcellular location is the membrane. This is an uncharacterized protein from Saccharomyces cerevisiae (strain ATCC 204508 / S288c) (Baker's yeast).